The chain runs to 274 residues: MQFSKMHGLGNDFMVVDAVTQNVFFSPELIRRLADRHLGVGFDQLLVIEPPYDPELDFHYRIFNADGSEVAQCGNGARCFARFVRLKGLTNKRDIRVSTANGRMVLTVTDDDLVRVNMGEPNFEPSAVPFRANKAEKTYIMRAAEQTILCGVVSIGNPHCVIQVDDVDTAAVETLGPVLESHERFPERANIGFMQVVKREHIRLRVYERGAGETQACGSGACAAVAVGIQQGLLAEEVRVELPGGRLDIAWKGPGHPLYMTGPAVHVYDGFIHL.

Residues N11, Q44, and N64 each contribute to the substrate site. Catalysis depends on C73, which acts as the Proton donor. Residues 74–75 (GN), N157, N190, and 208–209 (ER) contribute to the substrate site. The active-site Proton acceptor is the C217. 218–219 (GS) is a substrate binding site.

This sequence belongs to the diaminopimelate epimerase family. In terms of assembly, homodimer.

The protein localises to the cytoplasm. The enzyme catalyses (2S,6S)-2,6-diaminopimelate = meso-2,6-diaminopimelate. It participates in amino-acid biosynthesis; L-lysine biosynthesis via DAP pathway; DL-2,6-diaminopimelate from LL-2,6-diaminopimelate: step 1/1. Catalyzes the stereoinversion of LL-2,6-diaminopimelate (L,L-DAP) to meso-diaminopimelate (meso-DAP), a precursor of L-lysine and an essential component of the bacterial peptidoglycan. The protein is Diaminopimelate epimerase of Shigella boydii serotype 18 (strain CDC 3083-94 / BS512).